The chain runs to 292 residues: Histamine N-methyltransferase (292 aa).

Residue E28 coordinates substrate. S-adenosyl-L-methionine-binding residues include G60, E89, Q94, S120, and I142. Residue N283 participates in substrate binding.

This sequence belongs to the class I-like SAM-binding methyltransferase superfamily. HNMT family. As to quaternary structure, monomer.

The protein resides in the cytoplasm. The enzyme catalyses histamine + S-adenosyl-L-methionine = N(tau)-methylhistamine + S-adenosyl-L-homocysteine + H(+). Its function is as follows. Inactivates histamine by N-methylation. Plays an important role in degrading histamine and in regulating the airway response to histamine. The sequence is that of Histamine N-methyltransferase (HNMT) from Homo sapiens (Human).